The primary structure comprises 194 residues: Phosphoheptose isomerase (194 aa).

The SIS domain occupies I37–G194. N52 to G54 serves as a coordination point for substrate. Zn(2+) contacts are provided by H61 and E65. Residues E65, N93–D94, S119–S121, S124, and Q172 contribute to the substrate site. Residues Q172 and H180 each coordinate Zn(2+).

This sequence belongs to the SIS family. GmhA subfamily. Homotetramer. Requires Zn(2+) as cofactor.

It localises to the cytoplasm. The catalysed reaction is 2 D-sedoheptulose 7-phosphate = D-glycero-alpha-D-manno-heptose 7-phosphate + D-glycero-beta-D-manno-heptose 7-phosphate. The protein operates within carbohydrate biosynthesis; D-glycero-D-manno-heptose 7-phosphate biosynthesis; D-glycero-alpha-D-manno-heptose 7-phosphate and D-glycero-beta-D-manno-heptose 7-phosphate from sedoheptulose 7-phosphate: step 1/1. Its function is as follows. Catalyzes the isomerization of sedoheptulose 7-phosphate in D-glycero-D-manno-heptose 7-phosphate. The protein is Phosphoheptose isomerase of Sodalis glossinidius (strain morsitans).